The chain runs to 524 residues: BEL1-like homeodomain protein 3 (524 aa).

An SR/KY domain region spans residues 171-187 (SRYLKPTQQLLDEVVSV). Basic and acidic residues-rich tracts occupy residues 195–205 (NKKMKNDKGQD) and 216–235 (EDDK…ELQS). The segment at 195 to 236 (NKKMKNDKGQDFHNGSSDNITEDDKSQSQELSPSERQELQSK) is disordered. The segment at 229–300 (ERQELQSKKS…CLRDAIKEQI (72 aa)) is BELL domain. A DNA-binding region (homeobox) is located at residues 346-408 (AWRPQRGLPE…NARVRLWKPM (63 aa)). A disordered region spans residues 429–463 (QDTKKMQETSQLKHEDSSSSQQQNQGNNNNNIPYT). A compositionally biased stretch (basic and acidic residues) spans 430–445 (DTKKMQETSQLKHEDS). Residues 446 to 459 (SSSQQQNQGNNNNN) show a composition bias toward low complexity.

The protein belongs to the TALE/BELL homeobox family. In terms of assembly, may form heterodimeric complex with the TALE/KNOX protein STM. Interacts with OFP1, OFP2, OFP3, OFP4, OFP5 and OFP15.

The protein localises to the nucleus. Its function is as follows. Transcription factor that is responsive of the nuclear import of SHOOT MERISTEMLESS (STM). In Arabidopsis thaliana (Mouse-ear cress), this protein is BEL1-like homeodomain protein 3 (BLH3).